A 182-amino-acid chain; its full sequence is Pyruvoyl-dependent arginine decarboxylase (182 aa).

Position 44 is a pyruvic acid (Ser) (Ser-44).

This sequence belongs to the PdaD family. Requires pyruvate as cofactor.

It catalyses the reaction L-arginine + H(+) = agmatine + CO2. In Thermoplasma volcanium (strain ATCC 51530 / DSM 4299 / JCM 9571 / NBRC 15438 / GSS1), this protein is Pyruvoyl-dependent arginine decarboxylase.